Here is a 273-residue protein sequence, read N- to C-terminus: Shikimate dehydrogenase (NADP(+)) (273 aa).

Residues 14–16 and Thr-59 each bind shikimate; that span reads SLS. Lys-63 (proton acceptor) is an active-site residue. The shikimate site is built by Asn-84 and Asp-99. NADP(+) contacts are provided by residues 122-126 and Met-212; that span reads GAGGA. Residue Tyr-214 coordinates shikimate. Gly-235 contributes to the NADP(+) binding site.

This sequence belongs to the shikimate dehydrogenase family. In terms of assembly, homodimer.

The enzyme catalyses shikimate + NADP(+) = 3-dehydroshikimate + NADPH + H(+). It participates in metabolic intermediate biosynthesis; chorismate biosynthesis; chorismate from D-erythrose 4-phosphate and phosphoenolpyruvate: step 4/7. Its function is as follows. Involved in the biosynthesis of the chorismate, which leads to the biosynthesis of aromatic amino acids. Catalyzes the reversible NADPH linked reduction of 3-dehydroshikimate (DHSA) to yield shikimate (SA). The polypeptide is Shikimate dehydrogenase (NADP(+)) (Aeropyrum pernix (strain ATCC 700893 / DSM 11879 / JCM 9820 / NBRC 100138 / K1)).